We begin with the raw amino-acid sequence, 833 residues long: Leucine--tRNA ligase (833 aa).

The 'HIGH' region motif lies at 41–52; that stretch reads PYPSGAGLHVGH. The 'KMSKS' region motif lies at 610–614; sequence KMSKS. Lys613 provides a ligand contact to ATP.

The protein belongs to the class-I aminoacyl-tRNA synthetase family.

It localises to the cytoplasm. It carries out the reaction tRNA(Leu) + L-leucine + ATP = L-leucyl-tRNA(Leu) + AMP + diphosphate. The sequence is that of Leucine--tRNA ligase from Streptococcus pyogenes serotype M28 (strain MGAS6180).